The primary structure comprises 429 residues: Enolase 2 (429 aa).

Gln163 contributes to the (2R)-2-phosphoglycerate binding site. Catalysis depends on Glu205, which acts as the Proton donor. Mg(2+) is bound by residues Asp242, Glu286, and Asp313. (2R)-2-phosphoglycerate contacts are provided by Lys338, Arg367, Ser368, and Lys389. The active-site Proton acceptor is the Lys338.

This sequence belongs to the enolase family. The cofactor is Mg(2+).

The protein resides in the cytoplasm. It localises to the secreted. The protein localises to the cell surface. It carries out the reaction (2R)-2-phosphoglycerate = phosphoenolpyruvate + H2O. The protein operates within carbohydrate degradation; glycolysis; pyruvate from D-glyceraldehyde 3-phosphate: step 4/5. Functionally, catalyzes the reversible conversion of 2-phosphoglycerate (2-PG) into phosphoenolpyruvate (PEP). It is essential for the degradation of carbohydrates via glycolysis. The chain is Enolase 2 from Lactiplantibacillus plantarum (strain ATCC BAA-793 / NCIMB 8826 / WCFS1) (Lactobacillus plantarum).